The sequence spans 498 residues: Glycerol kinase (498 aa).

An ADP-binding site is contributed by Thr12. Positions 12, 13, and 14 each coordinate ATP. Thr12 contributes to the sn-glycerol 3-phosphate binding site. Arg16 contacts ADP. Sn-glycerol 3-phosphate contacts are provided by Arg82, Glu83, Tyr134, and Asp243. Arg82, Glu83, Tyr134, Asp243, and Gln244 together coordinate glycerol. Positions 265 and 308 each coordinate ADP. Positions 265, 308, 312, and 409 each coordinate ATP. Residues Gly409 and Asn413 each contribute to the ADP site.

Belongs to the FGGY kinase family. As to quaternary structure, homotetramer and homodimer (in equilibrium).

The enzyme catalyses glycerol + ATP = sn-glycerol 3-phosphate + ADP + H(+). It participates in polyol metabolism; glycerol degradation via glycerol kinase pathway; sn-glycerol 3-phosphate from glycerol: step 1/1. Its activity is regulated as follows. Activated by phosphorylation and inhibited by fructose 1,6-bisphosphate (FBP). Functionally, key enzyme in the regulation of glycerol uptake and metabolism. Catalyzes the phosphorylation of glycerol to yield sn-glycerol 3-phosphate. The chain is Glycerol kinase from Clostridium botulinum (strain Okra / Type B1).